Reading from the N-terminus, the 345-residue chain is NADH-ubiquinone oxidoreductase chain 2 (345 aa).

The next 10 helical transmembrane spans lie at 3–23 (PYIL…TFAS), 25–45 (NWLL…PLMA), 59–79 (YFIT…INAW), 95–115 (ALMT…FWLP), 148–168 (LMPE…GWGG), 177–196 (IMAY…MHFM), 201–223 (IINL…TLNS), 236–256 (FPAL…LPPL), 273–293 (NLAL…YFYL), and 322–342 (FILP…PSII).

Belongs to the complex I subunit 2 family.

The protein resides in the mitochondrion inner membrane. The catalysed reaction is a ubiquinone + NADH + 5 H(+)(in) = a ubiquinol + NAD(+) + 4 H(+)(out). In terms of biological role, core subunit of the mitochondrial membrane respiratory chain NADH dehydrogenase (Complex I) that is believed to belong to the minimal assembly required for catalysis. Complex I functions in the transfer of electrons from NADH to the respiratory chain. The immediate electron acceptor for the enzyme is believed to be ubiquinone. In Polypterus ornatipinnis (Ornate bichir), this protein is NADH-ubiquinone oxidoreductase chain 2 (MT-ND2).